A 169-amino-acid chain; its full sequence is Signal peptidase complex subunit 1 (169 aa).

The Cytoplasmic segment spans residues Met1–Gly93. The tract at residues Phe91–Asn169 is (Microbial infection) Interaction with JEV NS2B. Residues Ile94–Trp114 traverse the membrane as a helical segment. The interval Glu110–Asn169 is (Microbial infection) Interaction with HCV NS2 and HCV E2. A topological domain (lumenal) is located at residue Thr115. A helical membrane pass occupies residues Val116–Ile136. Over Tyr137–Asn169 the chain is Cytoplasmic. The disordered stretch occupies residues Gln148–Asn169.

The protein belongs to the SPCS1 family. Component of the signal peptidase complex paralog A (SPC-A) composed of a catalytic subunit SEC11A and three accessory subunits SPCS1, SPCS2 and SPCS3. Component of the signal peptidase complex paralog C (SPC-C) composed of a catalytic subunit SEC11C and three accessory subunits SPCS1, SPCS2 and SPCS3. Within the complex, interacts with SPCS2 and SPCS3. The complex induces a local thinning of the ER membrane which is used to measure the length of the signal peptide (SP) h-region of protein substrates. This ensures the selectivity of the complex towards h-regions shorter than 18-20 amino acids. As to quaternary structure, (Microbial infection) Interacts with hepatitis C virus (HCV) proteins NS2 and E2. Interacts with NS2B from Japanese encephalitis virus (JEV), West Nile virus (WNV), and Zika virus (ZIKV). Post-translationally, may be phosphorylated.

Its subcellular location is the endoplasmic reticulum membrane. Its function is as follows. Component of the signal peptidase complex (SPC) which catalyzes the cleavage of N-terminal signal sequences from nascent proteins as they are translocated into the lumen of the endoplasmic reticulum. Dispensable for SPC enzymatic activity. In terms of biological role, (Microbial infection) Required for the post-translational processing of proteins involved in virion assembly and secretion from flaviviruses such as West Nile virus (WNV), Japanese encephalitis virus (JEV), Dengue virus type 2 (DENV-2), Yellow Fever virus (YFV), Zika virus (ZIKV) and hepatitis C virus (HCV). Plays a key role in the post-translational processing of flaviviral structural proteins prM, E, and NS1. In HCV, it is involved in virion assembly where it promotes the interaction between HCV virus proteins NS2 and E2. The polypeptide is Signal peptidase complex subunit 1 (SPCS1) (Homo sapiens (Human)).